Here is a 215-residue protein sequence, read N- to C-terminus: Glutathione S-transferase D4 (215 aa).

In terms of domain architecture, GST N-terminal spans 1–80 (MDFYYSPRSS…YLVEKYGKDD (80 aa)). Glutathione contacts are provided by residues Ser9, 50–52 (HTI), and 64–66 (ESR). The 122-residue stretch at 86 to 207 (DPQKRALINQ…KGLLQMKTMY (122 aa)) folds into the GST C-terminal domain.

The protein belongs to the GST superfamily. Delta family. In terms of assembly, homodimer.

It carries out the reaction RX + glutathione = an S-substituted glutathione + a halide anion + H(+). Its function is as follows. Conjugation of reduced glutathione to a wide number of exogenous and endogenous hydrophobic electrophiles. May be involved in detoxification. This Drosophila melanogaster (Fruit fly) protein is Glutathione S-transferase D4.